We begin with the raw amino-acid sequence, 327 residues long: 4-hydroxy-2-oxoglutarate aldolase, mitochondrial (327 aa).

A mitochondrion-targeting transit peptide spans 1–25 (MLGPQVWSSVRQGLSRSLSRNVGVW). 77–78 (SN) is a substrate binding site. Lys196 serves as the catalytic Schiff-base intermediate with substrate. The substrate site is built by Ser198 and Gly222.

The protein belongs to the DapA family. In terms of assembly, homotetramer.

The protein localises to the mitochondrion. It carries out the reaction (4S)-4-hydroxy-2-oxoglutarate = glyoxylate + pyruvate. The catalysed reaction is (4R)-4-hydroxy-2-oxoglutarate = glyoxylate + pyruvate. With respect to regulation, inhibited by divalent cations. Functionally, catalyzes the final step in the metabolic pathway of hydroxyproline. The protein is 4-hydroxy-2-oxoglutarate aldolase, mitochondrial (HOGA1) of Homo sapiens (Human).